The following is a 440-amino-acid chain: Armadillo-like helical domain containing protein 1 (440 aa).

This is Armadillo-like helical domain containing protein 1 from Homo sapiens (Human).